The sequence spans 727 residues: YTH domain-containing protein 1 (727 aa).

The segment covering 1-12 (MAADSREEKDGE) has biased composition (basic and acidic residues). The disordered stretch occupies residues 1-338 (MAADSREEKD…KHEKLSSSVR (338 aa)). S35 is modified (phosphoserine). A compositionally biased stretch (basic and acidic residues) spans 50–59 (DRMESTDTKR). A compositionally biased stretch (polar residues) spans 63-90 (SVHSRQLVSKPLSSSVSNNKRIVSTKGK). Basic and acidic residues predominate over residues 91-115 (SATEYKNEEYQRSERNKRLDADRKI). A Glycyl lysine isopeptide (Lys-Gly) (interchain with G-Cter in SUMO2) cross-link involves residue K96. Phosphoserine is present on residues S118 and S120. Over residues 124–144 (EPYKNQPEKTCVRKRDPERRA) the composition is skewed to basic and acidic residues. S146 carries the post-translational modification Phosphoserine. Residue T148 is modified to Phosphothreonine. Composition is skewed to basic and acidic residues over residues 151–163 (GSER…DRRA) and 170–185 (SKEE…DHET). The span at 199-254 (ENEEEGVEEDVEEDEEVEEDAEEDEEVDEDGEEEEEEEEEEEEEEEEEEEEYEQDE) shows a compositional bias: acidic residues. Positions 255–270 (RDQKEEGNDYDTRSEA) are enriched in basic and acidic residues. A compositionally biased stretch (polar residues) spans 280-289 (FTDGSVRSGS). 5 positions are modified to phosphoserine: S308, S315, S317, S318, and S320. A compositionally biased stretch (low complexity) spans 315–325 (SGSSASESYAG). The YTH domain maps to 355 to 492 (ARFFLIKSNN…ECGTQLCLLF (138 aa)). RNA-binding positions include 361 to 363 (KSN) and 377 to 378 (WS). A Phosphoserine modification is found at S424. Residue W428 coordinates RNA. The residue at position 435 (S435) is a Phosphoserine. Residue D476 coordinates RNA. The span at 508–523 (RHKRRMHSQPRSRGRP) shows a compositional bias: basic residues. Disordered regions lie at residues 508-564 (RHKR…PGYL), 607-643 (GMPP…HPVP), and 669-727 (AVVS…RYRR). A compositionally biased stretch (basic and acidic residues) spans 524 to 564 (SRREPVRDVGRRRPEDYDIHNSRKKPRIDYPPEFHQRPGYL). At S545 the chain carries Phosphoserine. Residues 679–727 (RERDRERERDRPRDNRRDRERDRGRDRERERERLCDRDRDRGERGRYRR) are compositionally biased toward basic and acidic residues.

As to quaternary structure, interacts with SRSF1. Interacts with SRSF2. Interacts with SRSF3. Interacts with SRSF7. Interacts with SRSF10. Interacts with CPSF6. Interacts with KHDRBS1/SAM68. Interacts with TRA2B. Interacts with KHDRBS3. Interacts with EMD. Interacts with RBMX. Interacts with ZCCHC8. Tyrosine phosphorylated.

It is found in the nucleus. The protein resides in the nucleus speckle. Regulator of alternative splicing that specifically recognizes and binds N6-methyladenosine (m6A)-containing RNAs. M6A is a modification present at internal sites of mRNAs and some non-coding RNAs and plays a role in the efficiency of mRNA splicing, processing and stability. Acts as a key regulator of exon-inclusion or exon-skipping during alternative splicing via interaction with mRNA splicing factors SRSF3 and SRSF10. Specifically binds m6A-containing mRNAs and promotes recruitment of SRSF3 to its mRNA-binding elements adjacent to m6A sites, leading to exon-inclusion during alternative splicing. In contrast, interaction with SRSF3 prevents interaction with SRSF10, a splicing factor that promotes exon skipping: this prevents SRSF10 from binding to its mRNA-binding sites close to m6A-containing regions, leading to inhibit exon skipping during alternative splicing. May also regulate alternative splice site selection. Also involved in nuclear export of m6A-containing mRNAs via interaction with SRSF3: interaction with SRSF3 facilitates m6A-containing mRNA-binding to both SRSF3 and NXF1, promoting mRNA nuclear export. Involved in S-adenosyl-L-methionine homeostasis by regulating expression of MAT2A transcripts, probably by binding m6A-containing MAT2A mRNAs. Also recognizes and binds m6A on other RNA molecules. Involved in random X inactivation mediated by Xist RNA: recognizes and binds m6A-containing Xist and promotes transcription repression activity of Xist. Also recognizes and binds m6A-containing single-stranded DNA. Involved in germline development: required for spermatogonial development in males and oocyte growth and maturation in females, probably via its role in alternative splicing. The protein is YTH domain-containing protein 1 of Homo sapiens (Human).